A 188-amino-acid polypeptide reads, in one-letter code: Cytochrome c oxidase assembly protein CtaG (188 aa).

The Cytoplasmic portion of the chain corresponds to 1 to 8 (MSKKSNKN). Residues 9 to 31 (LAFSLLGLIISMVLLSFASVPIY) form a helical; Signal-anchor for type II membrane protein membrane-spanning segment. At 32 to 188 (NLFCKVTGYG…SSLRGNYVSN (157 aa)) the chain is on the periplasmic side.

It belongs to the COX11/CtaG family.

The protein localises to the cell inner membrane. Its function is as follows. Exerts its effect at some terminal stage of cytochrome c oxidase synthesis, probably by being involved in the insertion of the copper B into subunit I. The sequence is that of Cytochrome c oxidase assembly protein CtaG from Rickettsia conorii (strain ATCC VR-613 / Malish 7).